Consider the following 150-residue polypeptide: SsrA-binding protein (150 aa).

This sequence belongs to the SmpB family.

It localises to the cytoplasm. Its function is as follows. Required for rescue of stalled ribosomes mediated by trans-translation. Binds to transfer-messenger RNA (tmRNA), required for stable association of tmRNA with ribosomes. tmRNA and SmpB together mimic tRNA shape, replacing the anticodon stem-loop with SmpB. tmRNA is encoded by the ssrA gene; the 2 termini fold to resemble tRNA(Ala) and it encodes a 'tag peptide', a short internal open reading frame. During trans-translation Ala-aminoacylated tmRNA acts like a tRNA, entering the A-site of stalled ribosomes, displacing the stalled mRNA. The ribosome then switches to translate the ORF on the tmRNA; the nascent peptide is terminated with the 'tag peptide' encoded by the tmRNA and targeted for degradation. The ribosome is freed to recommence translation, which seems to be the essential function of trans-translation. The polypeptide is SsrA-binding protein (Campylobacter jejuni subsp. doylei (strain ATCC BAA-1458 / RM4099 / 269.97)).